The primary structure comprises 539 residues: Carboxypeptidase Y homolog A (539 aa).

A signal peptide spans 1–17 (MKALTATLLVGTALAAV). A propeptide spanning residues 18 to 122 (PPQQPIQVPT…KLEKYDLRVK (105 aa)) is cleaved from the precursor. Disulfide bonds link C176/C416, C310/C324, C334/C357, C341/C350, and C379/C386. Residue N207 is glycosylated (N-linked (GlcNAc...) asparagine). S263 is an active-site residue. Residue D455 is part of the active site. N-linked (GlcNAc...) asparagine glycosylation occurs at N506. H517 is a catalytic residue.

It belongs to the peptidase S10 family.

The protein localises to the vacuole. The enzyme catalyses Release of a C-terminal amino acid with broad specificity.. Functionally, vacuolar carboxypeptidase involved in degradation of small peptides. Digests preferentially peptides containing an aliphatic or hydrophobic residue in P1' position, as well as methionine, leucine or phenylalanine in P1 position of ester substrate. The sequence is that of Carboxypeptidase Y homolog A (cpyA) from Coccidioides posadasii (strain C735) (Valley fever fungus).